A 207-amino-acid polypeptide reads, in one-letter code: Inhibitor of hydrogen peroxide resistance (207 aa).

The H-T-H motif DNA-binding region spans 163-182; that stretch reads MNYIHQRTRVSRSVVAEVLA.

It belongs to the IprA family.

In terms of biological role, involved in oxidative stress resistance. The protein is Inhibitor of hydrogen peroxide resistance of Salmonella typhimurium (strain LT2 / SGSC1412 / ATCC 700720).